The following is a 117-amino-acid chain: Toxin CSTX-8 (117 aa).

The first 20 residues, 1–20 (MKVLVICAVLFLAIFSNSSA), serve as a signal peptide directing secretion. Residues 21–47 (ETEDDFLEDESFQADDVIPFLASEQVR) constitute a propeptide that is removed on maturation. Intrachain disulfides connect Cys-50–Cys-65, Cys-57–Cys-74, Cys-64–Cys-95, and Cys-76–Cys-93. Positions 82–87 (RSETDR) are excised as a propeptide. The residue at position 116 (Thr-116) is a Threonine amide.

Belongs to the neurotoxin 19 (CSTX) family. 12 subfamily. Heterodimer of A and B chains; disulfide-linked. Interacts with CSTX-1 (AC P81694), and with CSTX-9 (AC P58604). Expressed by the venom gland.

It is found in the secreted. The protein resides in the target cell membrane. In terms of biological role, synergistic toxin that induces or increases a cytolytic effect when combined with CSTX-1 (AC P81694) or CSTX-9 (AC P58604). When alone, has a weak insecticidal activity, with an unknown molecular target. In Cupiennius salei (American wandering spider), this protein is Toxin CSTX-8.